The primary structure comprises 2388 residues: Spectrin beta chain, non-erythrocytic 2 (2388 aa).

Ser-2 is modified (N-acetylserine). Positions 2 to 278 (SSTLSPTDFD…IITYVATYYH (277 aa)) are actin-binding. 2 positions are modified to phosphoserine: Ser-6 and Ser-31. 2 consecutive Calponin-homology (CH) domains span residues 57–161 (AVQK…LRFQ) and 176–281 (KSAK…HYFS). Spectrin repeat units follow at residues 306–414 (LVEK…LALR), 427–527 (AARF…RERL), 532–639 (ELQK…RLEE), 642–744 (RLWR…QRLA), 749–849 (LYQF…RALE), and 856–954 (TMLS…KAAL). Residue Ser-959 is modified to Phosphoserine. 11 Spectrin repeats span residues 960–1063 (IQNY…SLGE), 1066–1169 (RLQD…GRLA), 1174–1266 (FQGF…NQEA), 1279–1379 (EQQH…ARSL), 1384–1485 (RAEL…RRLQ), 1489–1586 (EQHQ…RLEE), 1589–1692 (RAQQ…RLQE), 1696–1797 (LCQL…GQVL), 1801–1904 (YELQ…QLLL), 1910–2010 (FRFF…DWLQ), and 2017–2078 (VFGR…LTAL). Phosphoserine is present on Ser-1073. Ser-1574 carries the post-translational modification Phosphoserine. The span at 2080–2096 (ERENEQKRKREEEERRK) shows a compositional bias: basic and acidic residues. Disordered stretches follow at residues 2080-2112 (ERENEQKRKREEEERRKQPPTSEPMASQPEGSL) and 2124-2207 (DGTQ…HVAT). A compositionally biased stretch (polar residues) spans 2124–2163 (DGTQSKLPPSTQAPSINGVCTDTESSQPLLEQQRLEQSNV). Ser-2169 and Ser-2199 each carry phosphoserine. Residues 2218-2328 (QEQMEGTLCR…WLRVVNAAIA (111 aa)) form the PH domain. The segment at 2333-2388 (ASGEPEEPVVPSASRGLTRAMTMPPVSQPEGSIVLRSKDGREREREKRFSFFKKNK) is disordered. At Thr-2354 the chain carries Phosphothreonine. Residue Ser-2359 is modified to Phosphoserine. Basic and acidic residues predominate over residues 2368 to 2381 (RSKDGREREREKRF).

Belongs to the spectrin family. In terms of tissue distribution, abundantly transcribed in the brain. Neurons are the predominant cell-type to express the gene. Found abundantly in Purkinje cells.

The protein resides in the cytoplasm. Its subcellular location is the cytoskeleton. It localises to the cell cortex. Functionally, probably plays an important role in neuronal membrane skeleton. This chain is Spectrin beta chain, non-erythrocytic 2 (Sptbn2), found in Rattus norvegicus (Rat).